Consider the following 170-residue polypeptide: Protein-lysine myristoyltransferase HlyC (170 aa).

Active-site residues include His-23 and Asp-92. His-151 contacts heme.

This sequence belongs to the RTX toxin acyltransferase family. Monomer. In terms of processing, proteolytically cleaved by the protease systems ClpAP, ClpXP and FtsH, leading to its degradation.

The protein resides in the cytoplasm. The catalysed reaction is tetradecanoyl-[ACP] + L-lysyl-[protein] = N(6)-tetradecanoyl-L-lysyl-[protein] + holo-[ACP] + H(+). The acyltransferase activity is inhibited by heme. Protein-lysine myristoyltransferase that catalyzes myristoylation of the protoxin (HlyA) at two internal lysine residues, thereby converting it to the active toxin. The polypeptide is Protein-lysine myristoyltransferase HlyC (Escherichia coli).